We begin with the raw amino-acid sequence, 66 residues long: Alpha-conotoxin-like Tx2 (66 aa).

The first 21 residues, 1–21 (MGMRMMFTVFLLVVLATTVVS), serve as a signal peptide directing secretion. Positions 22-49 (FTSGRRTFHGRNAAAKASGLVSLTDRRP) are excised as a propeptide. Cystine bridges form between C51-C57 and C52-C65. The ser-Xaa-Pro motif, crucial for potent interaction with nAChR stretch occupies residues 53–55 (SHP).

It belongs to the conotoxin A superfamily. Expressed by the venom duct.

Its subcellular location is the secreted. Its function is as follows. Alpha-conotoxins act on postsynaptic membranes, they bind to the nicotinic acetylcholine receptors (nAChR) and thus inhibit them. The protein is Alpha-conotoxin-like Tx2 of Conus textile (Cloth-of-gold cone).